A 274-amino-acid polypeptide reads, in one-letter code: Serine acetyltransferase (274 aa).

This sequence belongs to the transferase hexapeptide repeat family.

It localises to the cytoplasm. The enzyme catalyses L-serine + acetyl-CoA = O-acetyl-L-serine + CoA. It participates in amino-acid biosynthesis; L-cysteine biosynthesis; L-cysteine from L-serine: step 1/2. The protein is Serine acetyltransferase (cysE) of Buchnera aphidicola subsp. Acyrthosiphon pisum (strain APS) (Acyrthosiphon pisum symbiotic bacterium).